Here is a 1503-residue protein sequence, read N- to C-terminus: Rho GTPase-activating protein 5 (1503 aa).

FF domains follow at residues 267 to 325 (QLVV…HIEQ), 366 to 420 (KLME…HVQH), 427 to 481 (RIEM…HQRE), and 482 to 548 (IVEK…HIGF). Tyrosine 550 is modified (3'-nitrotyrosine). Phosphoserine occurs at positions 590 and 765. One can recognise a pG1 pseudoGTPase domain in the interval 590 to 763 (STNIDKVNLF…LESVKHNLDV (174 aa)). The pG2 pseudoGTPase domain maps to 779–944 (RIVMCAMCGD…FSDVLEKKNM (166 aa)). 2 positions are modified to phosphoserine: serine 951 and serine 968. Disordered stretches follow at residues 975 to 1004 (YNNY…LPTP), 1022 to 1050 (HSTP…PKTN), and 1069 to 1091 (NPRK…SDNY). Positions 1036-1045 (VPPPIKPKPV) are enriched in pro residues. Serine 1115 carries the phosphoserine modification. Disordered regions lie at residues 1129 to 1157 (NTQG…YKYK) and 1169 to 1255 (YRRT…TRRN). Positions 1141-1151 (RTSKGHGERRP) are enriched in basic and acidic residues. Phosphoserine is present on residues serine 1196, serine 1203, and serine 1219. The Rho-GAP domain occupies 1263 to 1450 (MPLQDLVTAE…TFIQQCQFFF (188 aa)).

As to quaternary structure, may interact with RASA1/p120GAP. In terms of tissue distribution, expressed in spinal cord, cerebellum, kidney, testis and lung.

The protein resides in the cytoplasm. Its subcellular location is the cell membrane. GTPase-activating protein for Rho family members. The protein is Rho GTPase-activating protein 5 (Arhgap5) of Mus musculus (Mouse).